The following is a 97-amino-acid chain: Large ribosomal subunit protein uL23 (97 aa).

The protein belongs to the universal ribosomal protein uL23 family. As to quaternary structure, part of the 50S ribosomal subunit. Contacts protein L29, and trigger factor when it is bound to the ribosome.

One of the early assembly proteins it binds 23S rRNA. One of the proteins that surrounds the polypeptide exit tunnel on the outside of the ribosome. Forms the main docking site for trigger factor binding to the ribosome. The chain is Large ribosomal subunit protein uL23 from Anaeromyxobacter dehalogenans (strain 2CP-1 / ATCC BAA-258).